Here is a 517-residue protein sequence, read N- to C-terminus: Steroid 17-alpha-hydroxylase/17,20 lyase (517 aa).

Position 451 (C451) interacts with heme.

Belongs to the cytochrome P450 family. Heme serves as cofactor.

It is found in the membrane. It carries out the reaction a C21-steroid + reduced [NADPH--hemoprotein reductase] + O2 = a 17alpha-hydroxy-C21-steroid + oxidized [NADPH--hemoprotein reductase] + H2O + H(+). It catalyses the reaction 17alpha-hydroxyprogesterone + reduced [NADPH--hemoprotein reductase] + O2 = androst-4-ene-3,17-dione + acetate + oxidized [NADPH--hemoprotein reductase] + H2O + 2 H(+). The enzyme catalyses 17alpha-hydroxypregnenolone + reduced [NADPH--hemoprotein reductase] + O2 = 3beta-hydroxyandrost-5-en-17-one + acetate + oxidized [NADPH--hemoprotein reductase] + H2O + 2 H(+). Its pathway is lipid metabolism; steroid biosynthesis. In terms of biological role, conversion of pregnenolone and progesterone to their 17-alpha-hydroxylated products and subsequently to dehydroepiandrosterone (DHEA) and androstenedione. Catalyzes both the 17-alpha-hydroxylation and the 17,20-lyase reaction. The protein is Steroid 17-alpha-hydroxylase/17,20 lyase (cyp17a1) of Oryzias latipes (Japanese rice fish).